We begin with the raw amino-acid sequence, 636 residues long: Nuclear receptor subfamily 2 group C member 1 (636 aa).

The nuclear receptor DNA-binding region spans 149 to 224 (VELCVVCGDK…LGMKQDSVQC (76 aa)). NR C4-type zinc fingers lie at residues 152–172 (CVVC…CEGC) and 188–207 (CRGS…CQYC). The NR LBD domain maps to 382-623 (ECVGSNSNLT…SIIPYILRME (242 aa)).

This sequence belongs to the nuclear hormone receptor family. NR2 subfamily.

The protein resides in the nucleus. Functionally, orphan nuclear receptor. Binds the IR7 element in the promoter of its own gene in an autoregulatory negative feedback mechanism. Primarily repressor of a broad range of genes. Binds to hormone response elements (HREs) consisting of two 5'-AGGTCA-3' half site direct repeat consensus sequences. This chain is Nuclear receptor subfamily 2 group C member 1, found in Xenopus tropicalis (Western clawed frog).